A 543-amino-acid polypeptide reads, in one-letter code: Autophagy-related protein 18 (543 aa).

The disordered stretch occupies residues 163-200; sequence AYPSPPKLPNRQETSTKGTTNDNDRSHLENIPENVNAN. The span at 173–183 shows a compositional bias: polar residues; it reads RQETSTKGTTN. WD repeat units lie at residues 225-265 and 270-309; these read AHKA…KLYQ and TYPT…ANNT. The L/FRRG motif signature appears at 266–270; the sequence is FRRGT. Polar residues predominate over residues 326 to 336; that stretch reads KQSMKQXQGSK. Residues 326–408 are disordered; that stretch reads KQSMKQXQGS…ESIGDKIEPH (83 aa). Positions 343–372 are enriched in acidic residues; that stretch reads SDSDPDVDELVENDNSDDDELEEDIDDELA. Residues 377 to 400 show a composition bias toward polar residues; sequence NSSLTVPRRVSSTTSLGSYGSQES.

It belongs to the WD repeat PROPPIN family. As to quaternary structure, component of the PI(3,5)P2 regulatory complex.

The protein localises to the preautophagosomal structure membrane. It is found in the vacuole membrane. The protein resides in the endosome membrane. Its function is as follows. The PI(3,5)P2 regulatory complex regulates both the synthesis and turnover of phosphatidylinositol 3,5-bisphosphate (PtdIns(3,5)P2). Necessary for proper vacuole morphology. Plays an important role in osmotically-induced vacuole fragmentation. Involved in correct ATG9 trafficking to the pre-autophagosomal structure. Might also be involved in premeiotic DNA replication. Required for cytoplasm to vacuole transport (Cvt) vesicle formation, autophagy, glucose-induced micropexophagy and ethanol-induced macropexophagy. Required for the involution of the vacuole that occurs during micropexophagy. Involved in the recruitment of ATG2 to punctate structures when cells are grown on glucose. This Komagataella pastoris (Yeast) protein is Autophagy-related protein 18 (ATG18).